An 88-amino-acid polypeptide reads, in one-letter code: Putative membrane protein insertion efficiency factor (88 aa).

Positions 67-88 (LNAGGYDPVPPKSDNHSKENKK) are disordered. Basic and acidic residues predominate over residues 79-88 (SDNHSKENKK).

The protein belongs to the UPF0161 family.

It is found in the cell inner membrane. Functionally, could be involved in insertion of integral membrane proteins into the membrane. The chain is Putative membrane protein insertion efficiency factor from Actinobacillus succinogenes (strain ATCC 55618 / DSM 22257 / CCUG 43843 / 130Z).